A 420-amino-acid polypeptide reads, in one-letter code: MQYALLGLGLSNKYAAKFLLKLGEKIFVSESGKLSSEDKAFLEENNIPYEEGVNSEKILEADVILTSPSVPHNHPILLKAQQMGKYVDTEITYFMKFLDWKPKIIAVTGSVGKSTTVAMINHLISKSASSQISGNFGIPIAQVLLEGKKPEYIVVEISSFQLYWTPFFKPNVAVITNIYPNHLDWHPSMEHYVDSKFKITKFQDNEDHFVYNPKDMETFKRLALVQAKRVPFTVDFKFEEIPFHIRTKQNMENIAAAKTVLKVLGLPFSMSMLEDFTPLPHRMEYCGTINGAHYYNDSKATNAAAVVKALENFDNNLYLIIAGKGKNEDYSKLANEISKKCKFVAIVGPISDAVEPYLKERNVNYKRFSNIEEAVFEISKMAKEGDYVLLGPAGASYDAYKNFEERGNHFKEIVKKLMQG.

ATP is bound at residue 109–115 (GSVGKST).

It belongs to the MurCDEF family.

It localises to the cytoplasm. It carries out the reaction UDP-N-acetyl-alpha-D-muramoyl-L-alanine + D-glutamate + ATP = UDP-N-acetyl-alpha-D-muramoyl-L-alanyl-D-glutamate + ADP + phosphate + H(+). The protein operates within cell wall biogenesis; peptidoglycan biosynthesis. Its function is as follows. Cell wall formation. Catalyzes the addition of glutamate to the nucleotide precursor UDP-N-acetylmuramoyl-L-alanine (UMA). The polypeptide is UDP-N-acetylmuramoylalanine--D-glutamate ligase (Fervidobacterium nodosum (strain ATCC 35602 / DSM 5306 / Rt17-B1)).